Reading from the N-terminus, the 143-residue chain is Transcriptional regulator MraZ (143 aa).

2 consecutive SpoVT-AbrB domains span residues 5 to 47 (THTP…PRAE) and 76 to 119 (TDEQ…DAQA).

This sequence belongs to the MraZ family. In terms of assembly, forms oligomers.

The protein localises to the cytoplasm. It localises to the nucleoid. The chain is Transcriptional regulator MraZ from Mycobacterium leprae (strain Br4923).